The following is a 79-amino-acid chain: U1-plectoxin-Pt1c (79 aa).

The signal sequence occupies residues 1-18; the sequence is HLILASALICALVVCTFA. The propeptide occupies 19-31; that stretch reads EEQVNVPFLPDER. 5 cysteine pairs are disulfide-bonded: Cys-35-Cys-49, Cys-42-Cys-55, Cys-48-Cys-66, Cys-52-Cys-75, and Cys-57-Cys-64. The propeptide occupies 78–79; sequence RR.

The protein belongs to the neurotoxin 02 (plectoxin) family. 02 (plectoxin) subfamily. As to expression, expressed by the venom gland.

Its subcellular location is the secreted. Its function is as follows. Potent toxin that may paralyze and/or kill insect pests such as H.virescens (lepidoptera), S.exigua (beet armyworm) and M.sexta (tobacco hornworm). The chain is U1-plectoxin-Pt1c from Plectreurys tristis (Spider).